The following is a 106-amino-acid chain: Protein yippee-like At4g27745 (106 aa).

The Yippee domain maps to 8-105; sequence RLYSCCNCRN…FEKAKIVKED (98 aa). Residues C12, C15, C68, and C71 each coordinate Zn(2+).

This sequence belongs to the yippee family.

In Arabidopsis thaliana (Mouse-ear cress), this protein is Protein yippee-like At4g27745.